Consider the following 235-residue polypeptide: Phosphoribosylaminoimidazole-succinocarboxamide synthase (235 aa).

The protein belongs to the SAICAR synthetase family.

The enzyme catalyses 5-amino-1-(5-phospho-D-ribosyl)imidazole-4-carboxylate + L-aspartate + ATP = (2S)-2-[5-amino-1-(5-phospho-beta-D-ribosyl)imidazole-4-carboxamido]succinate + ADP + phosphate + 2 H(+). The protein operates within purine metabolism; IMP biosynthesis via de novo pathway; 5-amino-1-(5-phospho-D-ribosyl)imidazole-4-carboxamide from 5-amino-1-(5-phospho-D-ribosyl)imidazole-4-carboxylate: step 1/2. The protein is Phosphoribosylaminoimidazole-succinocarboxamide synthase of Streptococcus pneumoniae (strain 70585).